Consider the following 304-residue polypeptide: Homoserine O-acetyltransferase (304 aa).

Catalysis depends on cysteine 142, which acts as the Acyl-thioester intermediate. Substrate-binding residues include lysine 163 and serine 191. The Proton acceptor role is filled by histidine 234. Glutamate 236 is an active-site residue. Arginine 248 contacts substrate.

It belongs to the MetA family.

It localises to the cytoplasm. It carries out the reaction L-homoserine + acetyl-CoA = O-acetyl-L-homoserine + CoA. It functions in the pathway amino-acid biosynthesis; L-methionine biosynthesis via de novo pathway; O-acetyl-L-homoserine from L-homoserine: step 1/1. In terms of biological role, transfers an acetyl group from acetyl-CoA to L-homoserine, forming acetyl-L-homoserine. This chain is Homoserine O-acetyltransferase, found in Thermotoga neapolitana (strain ATCC 49049 / DSM 4359 / NBRC 107923 / NS-E).